Reading from the N-terminus, the 156-residue chain is Perlucin-like protein (156 aa).

The N-terminal stretch at 1 to 22 (MGKLTVVGILTLFIFYIVAASG) is a signal peptide. Intrachain disulfides connect C30–C41, C58–C156, and C131–C147. A C-type lectin domain is found at 37-156 (YKTNCYFFSP…CNTDQMGYIC (120 aa)).

As to expression, component of the organic matrix of calcified shell layers like nacre and prisms.

It localises to the secreted. The protein is Perlucin-like protein of Mytilus galloprovincialis (Mediterranean mussel).